Consider the following 236-residue polypeptide: Small ribosomal subunit protein uS10m (236 aa).

The transit peptide at 1-24 (MMRQSIRPLRAFSSEVSWIARRTQ) directs the protein to the mitochondrion. The disordered stretch occupies residues 29-49 (KPGDLVPNKPEPSKNEQEPRF). Residues 39 to 49 (EPSKNEQEPRF) are compositionally biased toward basic and acidic residues.

Belongs to the universal ribosomal protein uS10 family. Part of the mitochondrial small ribosomal subunit.

Its subcellular location is the mitochondrion. Involved in mitochondrial genome encoded proteins translation. Involved in the binding of tRNA to the ribosomes. This is Small ribosomal subunit protein uS10m (RSM10) from Gibberella zeae (strain ATCC MYA-4620 / CBS 123657 / FGSC 9075 / NRRL 31084 / PH-1) (Wheat head blight fungus).